Here is a 58-residue protein sequence, read N- to C-terminus: Keratin-associated protein 19-9b (58 aa).

Residues 6 to 52 (GNYYGGLGYGLGGFGGFGGLGYGYGSSYGLGGYGGYGYFSPSFYGGY) form a 12 X 2 AA repeats of G-[YCGS] region.

The protein belongs to the KRTAP type 19 family. In terms of assembly, interacts with hair keratins.

Functionally, in the hair cortex, hair keratin intermediate filaments are embedded in an interfilamentous matrix, consisting of hair keratin-associated proteins (KRTAP), which are essential for the formation of a rigid and resistant hair shaft through their extensive disulfide bond cross-linking with abundant cysteine residues of hair keratins. The matrix proteins include the high-sulfur and high-glycine-tyrosine keratins. This is Keratin-associated protein 19-9b (Krtap19-9b) from Mus musculus (Mouse).